Consider the following 878-residue polypeptide: Leucine--tRNA ligase (878 aa).

The span at 1 to 14 (MTASKSSSATASAS) shows a compositional bias: low complexity. Positions 1–23 (MTASKSSSATASASDRPDRYDPI) are disordered. Residues 58–68 (PYPSGSLHMGH) carry the 'HIGH' region motif. The short motif at 632–636 (KMSKS) is the 'KMSKS' region element. Residue lysine 635 coordinates ATP.

The protein belongs to the class-I aminoacyl-tRNA synthetase family.

The protein resides in the cytoplasm. The catalysed reaction is tRNA(Leu) + L-leucine + ATP = L-leucyl-tRNA(Leu) + AMP + diphosphate. The sequence is that of Leucine--tRNA ligase from Synechococcus sp. (strain WH7803).